We begin with the raw amino-acid sequence, 207 residues long: Ras-related protein Rab-8A (207 aa).

Residues Ser-17, Gly-18, Val-19, Gly-20, Lys-21, Thr-22, Cys-23, Ser-35, Ser-39, and Thr-40 each coordinate GTP. Thr-22 contacts Mg(2+). 2 short sequence motifs (switch) span residues 31–45 (DAFN…GIDF) and 63–80 (DTAG…YYRG). Mg(2+) is bound by residues Thr-40 and Asp-63. Gly-66 contributes to the GTP binding site. Thr-72 carries the phosphothreonine modification. Residues Asn-121, Lys-122, Asp-124, Ala-152, and Lys-153 each coordinate GTP. 2 positions are modified to phosphoserine: Ser-181 and Ser-185. Cys-204 is modified (cysteine methyl ester). A lipid anchor (S-geranylgeranyl cysteine) is attached at Cys-204. A propeptide spans 205 to 207 (VLL) (removed in mature form).

It belongs to the small GTPase superfamily. Rab family. As to quaternary structure, interacts (GTP-bound form) with MICALL1; regulates RAB8A association with recycling endosomes. Interacts with MICALL2; competes with RAB13 and is involved in E-cadherin endocytic recycling. Interacts (GTP-bound form) with MICAL1, MICALCL, MICAL3, EHBP1 and EHBP1L1; at least in case of MICAL1, MICALCL, MICAL3 and EHBP1L1 two molecules of RAB8A can bind to one molecule of the effector protein; ternary complexes of RAB8A, RAB13 and either MICAL1 or EHBP1L1 are possible. Interacts with EHD1. Interacts with MAP4K2 and SYTL4. Interacts with SGSM1 and SGSM3. Interacts with RABIF, RIMS2, RPH3A and RPH3A. Interacts with OPTN. Interacts with RAB3IP, RAB3IP functions as guanine exchange factor (GEF). Interacts with MYO5B. Interacts with CIMAP3. Interacts with BIRC6/bruce. Interacts with OCRL. Interacts with AHI1. Interacts with DCDC1. Interacts with LRRK2; interaction facilitates phosphorylation of Thr-72. Interacts with RAB31P, GDI1, GDI2, CHM, CHML, RABGGTA, RABGGTB, TBC1D15 and INPP5B; these interactions are dependent on Thr-72 not being phosphorylated. Interacts with RILPL1 and RILPL2; these interactions are dependent on the phosphorylation of Thr-72 by LRRK2. Interacts with DZIP1; prevents inhibition by the GDP-dissociation inhibitor GDI2. Interacts (in GDP-bound form) with RAB3IP/Rabin8, RAB3IP functions as guanine exchange factor (GEF) towards RAB8A. Interacts (in GDP-bound form) with RPGR, RPGR functions as GEF towards RAB8A. It depends on Mg(2+) as a cofactor. In terms of processing, phosphorylation of Thr-72 in the switch II region by LRRK2 prevents the association of RAB regulatory proteins, including CHM, CHML and RAB GDP dissociation inhibitors GDI1 and GDI2. Phosphorylation by LRRK2 is required for localization to stressed lysosomes.

The protein localises to the cell membrane. The protein resides in the golgi apparatus. Its subcellular location is the endosome membrane. It is found in the recycling endosome membrane. It localises to the cell projection. The protein localises to the cilium. The protein resides in the cytoplasmic vesicle. Its subcellular location is the phagosome membrane. It is found in the cytoplasm. It localises to the cytoskeleton. The protein localises to the microtubule organizing center. The protein resides in the centrosome. Its subcellular location is the centriole. It is found in the cilium basal body. It localises to the midbody. The protein localises to the lysosome. It carries out the reaction GTP + H2O = GDP + phosphate + H(+). Its activity is regulated as follows. Regulated by guanine nucleotide exchange factors (GEFs) such as RAB3IP/Rabin8 and RPGR which promote the exchange of bound GDP for free GTP, GTPase activating proteins (GAPs) which increase the GTP hydrolysis activity, and GDP dissociation inhibitors (GDIs) which inhibit the dissociation of the nucleotide from the GTPase. Activated in response to insulin. In terms of biological role, the small GTPases Rab are key regulators of intracellular membrane trafficking, from the formation of transport vesicles to their fusion with membranes. Rabs cycle between an inactive GDP-bound form and an active GTP-bound form that is able to recruit to membranes different sets of downstream effectors directly responsible for vesicle formation, movement, tethering and fusion. RAB8A is involved in polarized vesicular trafficking and neurotransmitter release. Together with RAB11A, RAB3IP, the exocyst complex, PARD3, PRKCI, ANXA2, CDC42 and DNMBP promotes transcytosis of PODXL to the apical membrane initiation sites (AMIS), apical surface formation and lumenogenesis. Regulates the compacted morphology of the Golgi. Together with MYO5B and RAB11A participates in epithelial cell polarization. Also involved in membrane trafficking to the cilium and ciliogenesis. Together with MICALL2, may also regulate adherens junction assembly. May play a role in insulin-induced transport to the plasma membrane of the glucose transporter GLUT4 and therefore play a role in glucose homeostasis. Involved in autophagy. Participates in the export of a subset of neosynthesized proteins through a Rab8-Rab10-Rab11-dependent endososomal export route. Targeted to and stabilized on stressed lysosomes through LRRK2 phosphorylation. Suppresses stress-induced lysosomal enlargement through EHBP1 and EHNP1L1 effector proteins. This Canis lupus familiaris (Dog) protein is Ras-related protein Rab-8A (RAB8A).